We begin with the raw amino-acid sequence, 289 residues long: Pantothenate synthetase (289 aa).

30-37 (MGNLHEGH) serves as a coordination point for ATP. The Proton donor role is filled by His37. Gln61 serves as a coordination point for (R)-pantoate. Gln61 contributes to the beta-alanine binding site. 149 to 152 (GEKD) serves as a coordination point for ATP. Residue Gln155 coordinates (R)-pantoate. 186–189 (MSSR) provides a ligand contact to ATP.

Belongs to the pantothenate synthetase family. Homodimer.

It localises to the cytoplasm. The catalysed reaction is (R)-pantoate + beta-alanine + ATP = (R)-pantothenate + AMP + diphosphate + H(+). It participates in cofactor biosynthesis; (R)-pantothenate biosynthesis; (R)-pantothenate from (R)-pantoate and beta-alanine: step 1/1. Its function is as follows. Catalyzes the condensation of pantoate with beta-alanine in an ATP-dependent reaction via a pantoyl-adenylate intermediate. The sequence is that of Pantothenate synthetase from Psychromonas ingrahamii (strain DSM 17664 / CCUG 51855 / 37).